The chain runs to 232 residues: uncharacterized protein (232 aa).

Residues 119 to 145 (DEEYRENSKAPEAKARPSFVGEGRRLG) form a disordered region. Residues 123 to 133 (RENSKAPEAKA) show a composition bias toward basic and acidic residues.

This is an uncharacterized protein from Encephalitozoon cuniculi (strain GB-M1) (Microsporidian parasite).